The following is a 303-amino-acid chain: Putative S-adenosyl-L-methionine-dependent methyltransferase MAP_4197c (303 aa).

Residues Asp129 and 158-159 (DL) each bind S-adenosyl-L-methionine.

The protein belongs to the UPF0677 family.

Its function is as follows. Exhibits S-adenosyl-L-methionine-dependent methyltransferase activity. The polypeptide is Putative S-adenosyl-L-methionine-dependent methyltransferase MAP_4197c (Mycolicibacterium paratuberculosis (strain ATCC BAA-968 / K-10) (Mycobacterium paratuberculosis)).